Consider the following 345-residue polypeptide: Phosphoribosylformylglycinamidine cyclo-ligase (345 aa).

Belongs to the AIR synthase family.

The protein localises to the cytoplasm. The catalysed reaction is 2-formamido-N(1)-(5-O-phospho-beta-D-ribosyl)acetamidine + ATP = 5-amino-1-(5-phospho-beta-D-ribosyl)imidazole + ADP + phosphate + H(+). The protein operates within purine metabolism; IMP biosynthesis via de novo pathway; 5-amino-1-(5-phospho-D-ribosyl)imidazole from N(2)-formyl-N(1)-(5-phospho-D-ribosyl)glycinamide: step 2/2. The sequence is that of Phosphoribosylformylglycinamidine cyclo-ligase from Anaeromyxobacter dehalogenans (strain 2CP-1 / ATCC BAA-258).